Here is a 125-residue protein sequence, read N- to C-terminus: UPF0389 protein CG9231 (125 aa).

A helical transmembrane segment spans residues 69–88 (IRLANIMIALTAVGCAIMVY). N-linked (GlcNAc...) asparagine glycosylation is present at Asn112.

It belongs to the UPF0389 family.

Its subcellular location is the membrane. The protein is UPF0389 protein CG9231 of Drosophila melanogaster (Fruit fly).